Here is a 170-residue protein sequence, read N- to C-terminus: Large ribosomal subunit protein uL11 (170 aa).

It belongs to the universal ribosomal protein uL11 family. In terms of assembly, part of the ribosomal stalk of the 50S ribosomal subunit. Interacts with L10 and the large rRNA to form the base of the stalk. L10 forms an elongated spine to which L12 dimers bind in a sequential fashion forming a multimeric L10(L12)X complex.

Forms part of the ribosomal stalk which helps the ribosome interact with GTP-bound translation factors. This is Large ribosomal subunit protein uL11 from Saccharolobus islandicus (strain Y.N.15.51 / Yellowstone #2) (Sulfolobus islandicus).